A 176-amino-acid chain; its full sequence is Large ribosomal subunit protein uL10 (176 aa).

Belongs to the universal ribosomal protein uL10 family. As to quaternary structure, part of the ribosomal stalk of the 50S ribosomal subunit. The N-terminus interacts with L11 and the large rRNA to form the base of the stalk. The C-terminus forms an elongated spine to which L12 dimers bind in a sequential fashion forming a multimeric L10(L12)X complex.

Forms part of the ribosomal stalk, playing a central role in the interaction of the ribosome with GTP-bound translation factors. The polypeptide is Large ribosomal subunit protein uL10 (Coprothermobacter proteolyticus (strain ATCC 35245 / DSM 5265 / OCM 4 / BT)).